The following is a 259-amino-acid chain: UPF0246 protein PFL_1025 (259 aa).

This sequence belongs to the UPF0246 family.

The polypeptide is UPF0246 protein PFL_1025 (Pseudomonas fluorescens (strain ATCC BAA-477 / NRRL B-23932 / Pf-5)).